A 299-amino-acid chain; its full sequence is Syntenin-1 (299 aa).

Ser-2 bears the N-acetylserine mark. The segment at 2–103 is interaction with PDCD6IP; the sequence is SLYPSLEDLK…VAPVTGNDAG (102 aa). 3 short sequence motifs (LYPX(n)L motif) span residues 3–7, 46–50, and 50–54; these read LYPSL, LYPKL, and LYPEL. Ser-6 carries the post-translational modification Phosphoserine. Tyr-47 bears the Phosphotyrosine mark. 2 PDZ domains span residues 115 to 194 and 199 to 273; these read EVIL…IRDR and TVTM…IMPT. 251-252 is an a 1,2-diacyl-sn-glycero-3-phospho-(1D-myo-inositol-4,5-bisphosphate) binding site; that stretch reads KD.

Monomer and homodimer. Interacts with SDC1, SDC2, SDC3, SDC4, NRXN2, EPHA7, EPHB1, NF2 isoform 1, TGFA, IL5RA, NFASC, SDCBP2 and PTPRJ. Interacts with PDCD6IP. Forms a complex with PDCD6IP and SDC2. Interacts (via C-terminus) with TGFBR1. Binds to FZD7; this interaction is increased by inositol trisphosphate (IP3). Interacts with SMO. Post-translationally, phosphorylated on tyrosine residues.

Its subcellular location is the cell junction. It is found in the focal adhesion. The protein localises to the adherens junction. The protein resides in the cell membrane. It localises to the endoplasmic reticulum membrane. Its subcellular location is the nucleus. It is found in the melanosome. The protein localises to the cytoplasm. The protein resides in the cytosol. It localises to the cytoskeleton. Its subcellular location is the secreted. It is found in the extracellular exosome. The protein localises to the membrane raft. Functionally, multifunctional adapter protein involved in diverse array of functions including trafficking of transmembrane proteins, neuro and immunomodulation, exosome biogenesis, and tumorigenesis. Positively regulates TGFB1-mediated SMAD2/3 activation and TGFB1-induced epithelial-to-mesenchymal transition (EMT) and cell migration in various cell types. May increase TGFB1 signaling by enhancing cell-surface expression of TGFR1 by preventing the interaction between TGFR1 and CAV1 and subsequent CAV1-dependent internalization and degradation of TGFR1. In concert with SDC1/4 and PDCD6IP, regulates exosome biogenesis. Regulates migration, growth, proliferation, and cell cycle progression in a variety of cancer types. In adherens junctions may function to couple syndecans to cytoskeletal proteins or signaling components. Seems to couple transcription factor SOX4 to the IL-5 receptor (IL5RA). May also play a role in vesicular trafficking. Seems to be required for the targeting of TGFA to the cell surface in the early secretory pathway. The protein is Syntenin-1 (Sdcbp) of Mus musculus (Mouse).